We begin with the raw amino-acid sequence, 222 residues long: Cytidylate kinase (222 aa).

10 to 18 (GTSSSGKSV) serves as a coordination point for ATP.

It belongs to the cytidylate kinase family. Type 1 subfamily.

It is found in the cytoplasm. It carries out the reaction CMP + ATP = CDP + ADP. The catalysed reaction is dCMP + ATP = dCDP + ADP. This Mycoplasma capricolum subsp. capricolum (strain California kid / ATCC 27343 / NCTC 10154) protein is Cytidylate kinase.